A 288-amino-acid chain; its full sequence is Hyaluronidase (288 aa).

N36 is a glycosylation site (N-linked (GlcNAc...) asparagine). The active-site Proton donor is the E66. C142 and C154 are disulfide-bonded. N282 is a glycosylation site (N-linked (GlcNAc...) asparagine).

Belongs to the glycosyl hydrolase 56 family. In terms of tissue distribution, expressed by the venom gland.

Its subcellular location is the secreted. It catalyses the reaction Random hydrolysis of (1-&gt;4)-linkages between N-acetyl-beta-D-glucosamine and D-glucuronate residues in hyaluronate.. Its function is as follows. Hydrolyzes high molecular weight hyaluronic acid to produce small oligosaccharides. The chain is Hyaluronidase from Polybia paulista (Neotropical social wasp).